Consider the following 474-residue polypeptide: Replication factor C large subunit (474 aa).

45–52 (GPPGCGKT) contacts ATP. Residues 415–468 (DKKTNNKKGKENKTKNTTKKIKEIKETPKKEEVKEPKKQIEKQKSEKKEPKKQM) show a composition bias toward basic and acidic residues. Residues 415–474 (DKKTNNKKGKENKTKNTTKKIKEIKETPKKEEVKEPKKQIEKQKSEKKEPKKQMTLESFF) are disordered.

The protein belongs to the activator 1 small subunits family. RfcL subfamily. In terms of assembly, heteromultimer composed of small subunits (RfcS) and large subunits (RfcL).

Its function is as follows. Part of the RFC clamp loader complex which loads the PCNA sliding clamp onto DNA. This chain is Replication factor C large subunit, found in Methanococcus aeolicus (strain ATCC BAA-1280 / DSM 17508 / OCM 812 / Nankai-3).